The following is an 874-amino-acid chain: Rho GTPase-activating protein 42 (874 aa).

Positions 7-262 (EFSDSYLDSP…MKSANQDYRP (256 aa)) constitute a BAR domain. The stretch at 225–261 (KQQLQFNLQNTRNNFESTRQEVERLMQRMKSANQDYR) forms a coiled coil. The 110-residue stretch at 265–374 (QWTMEGYLYV…WLEAMDGKEP (110 aa)) folds into the PH domain. A Phosphotyrosine modification is found at Y376. Residues 376–572 (YTLPAIISKK…ILIEHYEKIF (197 aa)) form the Rho-GAP domain. A disordered region spans residues 575 to 720 (APDPSIPLPQ…GDVSPPIDLV (146 aa)). Low complexity predominate over residues 620 to 650 (DSYSSSPDSTPMGSIESLSSHSSEQNSTTKS). The segment covering 667–686 (TPSSSNGQKSLGLWTTSPES) has biased composition (polar residues). S683 is subject to Phosphoserine. Positions 687–697 (SSREDATKTDA) are enriched in basic and acidic residues. A compositionally biased stretch (polar residues) spans 700 to 711 (DCQSVASVTSPG). Phosphoserine occurs at positions 740, 753, 756, and 811. The span at 749–762 (SYSGSIQSLTSVGS) shows a compositional bias: polar residues. The tract at residues 749 to 777 (SYSGSIQSLTSVGSKETPKASPNPDLPPK) is disordered. Positions 816 to 874 (SSGRQAKAMYSCKAEHSHELSFPQGAIFSNVYPSVEPGWLKATYEGKTGLVPENYVVFL) constitute an SH3 domain. Y870 is subject to Phosphotyrosine.

As to expression, highly and selectively expressed in smooth muscle cells.

In terms of biological role, may influence blood pressure by functioning as a GTPase-activating protein for RHOA in vascular smooth muscle. This Homo sapiens (Human) protein is Rho GTPase-activating protein 42.